The sequence spans 266 residues: Putative pyruvate, phosphate dikinase regulatory protein (266 aa).

An ADP-binding site is contributed by 149-156 (GVSRTSKT).

Belongs to the pyruvate, phosphate/water dikinase regulatory protein family. PDRP subfamily.

The catalysed reaction is N(tele)-phospho-L-histidyl/L-threonyl-[pyruvate, phosphate dikinase] + ADP = N(tele)-phospho-L-histidyl/O-phospho-L-threonyl-[pyruvate, phosphate dikinase] + AMP + H(+). It carries out the reaction N(tele)-phospho-L-histidyl/O-phospho-L-threonyl-[pyruvate, phosphate dikinase] + phosphate + H(+) = N(tele)-phospho-L-histidyl/L-threonyl-[pyruvate, phosphate dikinase] + diphosphate. Functionally, bifunctional serine/threonine kinase and phosphorylase involved in the regulation of the pyruvate, phosphate dikinase (PPDK) by catalyzing its phosphorylation/dephosphorylation. The sequence is that of Putative pyruvate, phosphate dikinase regulatory protein from Geobacillus kaustophilus (strain HTA426).